We begin with the raw amino-acid sequence, 263 residues long: Post-GPI attachment to proteins factor 2 (263 aa).

6 helical membrane passes run 16 to 36, 69 to 89, 109 to 129, 143 to 163, 180 to 200, and 208 to 228; these read FVIC…ILSL, YIWR…AIAF, FLCN…LALT, CFGG…WLFN, YKIL…YLYW, and PGIY…NIFF.

Belongs to the PGAP2 family.

The protein localises to the golgi apparatus membrane. It localises to the endoplasmic reticulum membrane. Functionally, involved in the lipid remodeling steps of GPI-anchor maturation. Required for stable expression of GPI-anchored proteins at the cell surface. The protein is Post-GPI attachment to proteins factor 2 of Caenorhabditis elegans.